The following is a 510-amino-acid chain: Hyaluronidase PH-20 (510 aa).

A signal peptide spans 1 to 35 (MGVLKFKHIFFRSFVKSSGVSQIVFTFLLIPCCLT). 2 disulfide bridges follow: Cys60/Cys351 and Cys224/Cys238. Asn82 carries an N-linked (GlcNAc...) asparagine glycan. Glu148 functions as the Proton donor in the catalytic mechanism. 4 N-linked (GlcNAc...) asparagine glycosylation sites follow: Asn166, Asn235, Asn254, and Asn368. 3 cysteine pairs are disulfide-bonded: Cys376–Cys387, Cys381–Cys435, and Cys437–Cys464. Residues Asn393, Asn440, and Asn484 are each glycosylated (N-linked (GlcNAc...) asparagine). Ser491 carries GPI-anchor amidated serine lipidation. Residues 492–510 (TTMFIVNILFLIISSVASL) constitute a propeptide, removed in mature form.

The protein belongs to the glycosyl hydrolase 56 family. As to expression, testis.

The protein localises to the cell membrane. The enzyme catalyses Random hydrolysis of (1-&gt;4)-linkages between N-acetyl-beta-D-glucosamine and D-glucuronate residues in hyaluronate.. Its function is as follows. Involved in sperm-egg adhesion. Upon fertilization sperm must first penetrate a layer of cumulus cells that surrounds the egg before reaching the zona pellucida. The cumulus cells are embedded in a matrix containing hyaluronic acid which is formed prior to ovulation. This protein aids in penetrating the layer of cumulus cells by digesting hyaluronic acid. This is Hyaluronidase PH-20 (SPAM1) from Macaca fascicularis (Crab-eating macaque).